A 478-amino-acid polypeptide reads, in one-letter code: Probable L-ascorbate peroxidase 8, chloroplastic (478 aa).

Residues 1-13 show a composition bias toward low complexity; the sequence is MAERIAASLLPAA. 2 disordered regions span residues 1–31 and 44–66; these read MAER…VSAA and GGLR…RSGR. Residues 1–76 constitute a chloroplast transit peptide; that stretch reads MAERIAASLL…AGAGARAVVR (76 aa). Residues 14–26 show a composition bias toward pro residues; it reads SPSPAPSPPPPRP. The active-site Proton acceptor is the histidine 117. The disordered stretch occupies residues 245-276; it reads AHTLGRSRPDRSGWGKPETKYTKDGPGEPGGQ. Histidine 246 contacts heme b. Threonine 247 serves as a coordination point for K(+). Residues 251 to 270 show a composition bias toward basic and acidic residues; that stretch reads SRPDRSGWGKPETKYTKDGP. K(+) is bound by residues threonine 279 and aspartate 286. The segment at 346 to 417 is disordered; the sequence is AKFDPPEGFS…DNNGAAPQPE (72 aa). Positions 369–381 are enriched in pro residues; sequence PAPAPAAAPPPPP. A compositionally biased stretch (low complexity) spans 394 to 406; that stretch reads PVTVGAAVASSPA. Residues 458-478 form a helical membrane-spanning segment; the sequence is YFLNIMLLIGGLAFLTSLLGS.

This sequence belongs to the peroxidase family. Ascorbate peroxidase subfamily. Interacts with SWEET11/OS8N3. Heme b is required as a cofactor. Expressed in roots, leaves, stems and flowers. Expressed in leaves, shoots and panicles. Expressed at low levels in roots.

It is found in the plastid. Its subcellular location is the chloroplast thylakoid membrane. It carries out the reaction L-ascorbate + H2O2 = L-dehydroascorbate + 2 H2O. In terms of biological role, involved in defense response and tolerance to the bacterial pathogen Xanthomonas oryzae pv. oryzae (Xoo). Plays an important role in hydrogen peroxide removal during infection by Xoo. Involved in response to abiotic stress. Plays a role in hydrogen peroxide removal durings salt stress. The sequence is that of Probable L-ascorbate peroxidase 8, chloroplastic from Oryza sativa subsp. japonica (Rice).